We begin with the raw amino-acid sequence, 299 residues long: UDP-N-acetylenolpyruvoylglucosamine reductase (299 aa).

In terms of domain architecture, FAD-binding PCMH-type spans 29 to 193; sequence RIGGPAEIFL…TAASLRFRKA (165 aa). The active site involves R173. S222 acts as the Proton donor in catalysis. Residue E292 is part of the active site.

It belongs to the MurB family. It depends on FAD as a cofactor.

Its subcellular location is the cytoplasm. The enzyme catalyses UDP-N-acetyl-alpha-D-muramate + NADP(+) = UDP-N-acetyl-3-O-(1-carboxyvinyl)-alpha-D-glucosamine + NADPH + H(+). The protein operates within cell wall biogenesis; peptidoglycan biosynthesis. In terms of biological role, cell wall formation. The polypeptide is UDP-N-acetylenolpyruvoylglucosamine reductase (Syntrophotalea carbinolica (strain DSM 2380 / NBRC 103641 / GraBd1) (Pelobacter carbinolicus)).